The chain runs to 864 residues: Leucine--tRNA ligase (864 aa).

A 'HIGH' region motif is present at residues 47-57 (PYPSGNLHMGH). The interval 298-317 (SEQDRVADDRPKRGVATGGT) is disordered. The span at 299-309 (EQDRVADDRPK) shows a compositional bias: basic and acidic residues. A 'KMSKS' region motif is present at residues 622-626 (KMSKS). Lys-625 provides a ligand contact to ATP.

The protein belongs to the class-I aminoacyl-tRNA synthetase family.

Its subcellular location is the cytoplasm. It carries out the reaction tRNA(Leu) + L-leucine + ATP = L-leucyl-tRNA(Leu) + AMP + diphosphate. This chain is Leucine--tRNA ligase, found in Synechococcus sp. (strain RCC307).